Reading from the N-terminus, the 473-residue chain is Ribosomal RNA small subunit methyltransferase F (473 aa).

S-adenosyl-L-methionine contacts are provided by residues 123 to 129 (AAAPGSK), Glu147, Asp174, and Asp192. Residue Cys245 is the Nucleophile of the active site.

This sequence belongs to the class I-like SAM-binding methyltransferase superfamily. RsmB/NOP family.

It is found in the cytoplasm. It catalyses the reaction cytidine(1407) in 16S rRNA + S-adenosyl-L-methionine = 5-methylcytidine(1407) in 16S rRNA + S-adenosyl-L-homocysteine + H(+). Functionally, specifically methylates the cytosine at position 1407 (m5C1407) of 16S rRNA. This is Ribosomal RNA small subunit methyltransferase F from Vibrio cholerae serotype O1 (strain ATCC 39315 / El Tor Inaba N16961).